A 93-amino-acid chain; its full sequence is Small ribosomal subunit protein uS19 (93 aa).

Belongs to the universal ribosomal protein uS19 family.

In terms of biological role, protein S19 forms a complex with S13 that binds strongly to the 16S ribosomal RNA. The sequence is that of Small ribosomal subunit protein uS19 from Nitratidesulfovibrio vulgaris (strain DSM 19637 / Miyazaki F) (Desulfovibrio vulgaris).